The chain runs to 345 residues: S-adenosylmethionine:tRNA ribosyltransferase-isomerase (345 aa).

Belongs to the QueA family. In terms of assembly, monomer.

It localises to the cytoplasm. The catalysed reaction is 7-aminomethyl-7-carbaguanosine(34) in tRNA + S-adenosyl-L-methionine = epoxyqueuosine(34) in tRNA + adenine + L-methionine + 2 H(+). It functions in the pathway tRNA modification; tRNA-queuosine biosynthesis. Its function is as follows. Transfers and isomerizes the ribose moiety from AdoMet to the 7-aminomethyl group of 7-deazaguanine (preQ1-tRNA) to give epoxyqueuosine (oQ-tRNA). In Shewanella oneidensis (strain ATCC 700550 / JCM 31522 / CIP 106686 / LMG 19005 / NCIMB 14063 / MR-1), this protein is S-adenosylmethionine:tRNA ribosyltransferase-isomerase.